The chain runs to 157 residues: 2-C-methyl-D-erythritol 2,4-cyclodiphosphate synthase (157 aa).

The a divalent metal cation site is built by Asp9 and His11. 4-CDP-2-C-methyl-D-erythritol 2-phosphate contacts are provided by residues 9–11 (DVH) and 35–36 (HS). Residue His43 participates in a divalent metal cation binding. Residues 57-59 (DIG), 62-66 (FPDTD), 101-107 (AEKPKMA), 133-136 (TTTE), Phe140, and Arg143 contribute to the 4-CDP-2-C-methyl-D-erythritol 2-phosphate site.

This sequence belongs to the IspF family. As to quaternary structure, homotrimer. It depends on a divalent metal cation as a cofactor.

The enzyme catalyses 4-CDP-2-C-methyl-D-erythritol 2-phosphate = 2-C-methyl-D-erythritol 2,4-cyclic diphosphate + CMP. It functions in the pathway isoprenoid biosynthesis; isopentenyl diphosphate biosynthesis via DXP pathway; isopentenyl diphosphate from 1-deoxy-D-xylulose 5-phosphate: step 4/6. Its function is as follows. Involved in the biosynthesis of isopentenyl diphosphate (IPP) and dimethylallyl diphosphate (DMAPP), two major building blocks of isoprenoid compounds. Catalyzes the conversion of 4-diphosphocytidyl-2-C-methyl-D-erythritol 2-phosphate (CDP-ME2P) to 2-C-methyl-D-erythritol 2,4-cyclodiphosphate (ME-CPP) with a corresponding release of cytidine 5-monophosphate (CMP). The protein is 2-C-methyl-D-erythritol 2,4-cyclodiphosphate synthase of Listeria monocytogenes serotype 4b (strain CLIP80459).